A 348-amino-acid polypeptide reads, in one-letter code: tRNA N6-adenosine threonylcarbamoyltransferase (348 aa).

Histidine 119 and histidine 123 together coordinate Fe cation. Substrate contacts are provided by residues 141 to 145 (LVSGG), aspartate 174, glycine 187, aspartate 191, and asparagine 280. Aspartate 310 serves as a coordination point for Fe cation.

This sequence belongs to the KAE1 / TsaD family. Requires Fe(2+) as cofactor.

It localises to the cytoplasm. It catalyses the reaction L-threonylcarbamoyladenylate + adenosine(37) in tRNA = N(6)-L-threonylcarbamoyladenosine(37) in tRNA + AMP + H(+). Functionally, required for the formation of a threonylcarbamoyl group on adenosine at position 37 (t(6)A37) in tRNAs that read codons beginning with adenine. Is involved in the transfer of the threonylcarbamoyl moiety of threonylcarbamoyl-AMP (TC-AMP) to the N6 group of A37, together with TsaE and TsaB. TsaD likely plays a direct catalytic role in this reaction. In Enterococcus faecalis (strain ATCC 700802 / V583), this protein is tRNA N6-adenosine threonylcarbamoyltransferase.